A 93-amino-acid polypeptide reads, in one-letter code: Protein salt-induced and EIN3/EIL1-dependent 1 (93 aa).

Residues 23 to 36 are compositionally biased toward low complexity; it reads SSLLTESSSSSLCS. A disordered region spans residues 23–46; sequence SSLLTESSSSSLCSEEAEGGGGEA.

Its activity is regulated as follows. Triggered by EIN3. Its function is as follows. Involved in ethylene-dependent salt stress responses by reducing reactive oxygen species (ROS) accumulation. This Arabidopsis thaliana (Mouse-ear cress) protein is Protein salt-induced and EIN3/EIL1-dependent 1.